The chain runs to 55 residues: ATP synthase protein 8 (55 aa).

A helical transmembrane segment spans residues 4 to 24 (LNPNPWFTILIFTWAVFLTIL).

Belongs to the ATPase protein 8 family. As to quaternary structure, F-type ATPases have 2 components, CF(1) - the catalytic core - and CF(0) - the membrane proton channel.

The protein resides in the mitochondrion membrane. Its function is as follows. Mitochondrial membrane ATP synthase (F(1)F(0) ATP synthase or Complex V) produces ATP from ADP in the presence of a proton gradient across the membrane which is generated by electron transport complexes of the respiratory chain. F-type ATPases consist of two structural domains, F(1) - containing the extramembraneous catalytic core and F(0) - containing the membrane proton channel, linked together by a central stalk and a peripheral stalk. During catalysis, ATP synthesis in the catalytic domain of F(1) is coupled via a rotary mechanism of the central stalk subunits to proton translocation. Part of the complex F(0) domain. Minor subunit located with subunit a in the membrane. This chain is ATP synthase protein 8 (mt-atp8), found in Polypterus ornatipinnis (Ornate bichir).